A 222-amino-acid chain; its full sequence is MKSAVVLLPGLNRDRDMIAALTKISGKPPVTVWQTDTEIPDVDLIAIPGGFSFGDYLRCGAIAARMPVMRAVAEKAAKGVTVIGVCNGFQILVEAGLLPGALMRNTSLKFVCRQIKLEITNANTMFTRRYQPGQVIRSPVAHHDGNYFADAETLARLEGEGQVVFRYAEGTNPNGSINDIAGIINEQGNVLGLMPHPENLIEAAHGGSDGRALFEGALGIAA.

The region spanning 3–222 (SAVVLLPGLN…LFEGALGIAA (220 aa)) is the Glutamine amidotransferase type-1 domain. Cys-86 acts as the Nucleophile in catalysis. Residues His-196 and Glu-198 contribute to the active site.

Part of the FGAM synthase complex composed of 1 PurL, 1 PurQ and 2 PurS subunits.

The protein localises to the cytoplasm. It carries out the reaction N(2)-formyl-N(1)-(5-phospho-beta-D-ribosyl)glycinamide + L-glutamine + ATP + H2O = 2-formamido-N(1)-(5-O-phospho-beta-D-ribosyl)acetamidine + L-glutamate + ADP + phosphate + H(+). The catalysed reaction is L-glutamine + H2O = L-glutamate + NH4(+). It participates in purine metabolism; IMP biosynthesis via de novo pathway; 5-amino-1-(5-phospho-D-ribosyl)imidazole from N(2)-formyl-N(1)-(5-phospho-D-ribosyl)glycinamide: step 1/2. Functionally, part of the phosphoribosylformylglycinamidine synthase complex involved in the purines biosynthetic pathway. Catalyzes the ATP-dependent conversion of formylglycinamide ribonucleotide (FGAR) and glutamine to yield formylglycinamidine ribonucleotide (FGAM) and glutamate. The FGAM synthase complex is composed of three subunits. PurQ produces an ammonia molecule by converting glutamine to glutamate. PurL transfers the ammonia molecule to FGAR to form FGAM in an ATP-dependent manner. PurS interacts with PurQ and PurL and is thought to assist in the transfer of the ammonia molecule from PurQ to PurL. The protein is Phosphoribosylformylglycinamidine synthase subunit PurQ of Mesorhizobium japonicum (strain LMG 29417 / CECT 9101 / MAFF 303099) (Mesorhizobium loti (strain MAFF 303099)).